The sequence spans 66 residues: Large ribosomal subunit protein bL31 (66 aa).

Zn(2+) is bound by residues C16, C18, C36, and C39.

This sequence belongs to the bacterial ribosomal protein bL31 family. Type A subfamily. Part of the 50S ribosomal subunit. The cofactor is Zn(2+).

Its function is as follows. Binds the 23S rRNA. This chain is Large ribosomal subunit protein bL31, found in Bacillus licheniformis (strain ATCC 14580 / DSM 13 / JCM 2505 / CCUG 7422 / NBRC 12200 / NCIMB 9375 / NCTC 10341 / NRRL NRS-1264 / Gibson 46).